The sequence spans 278 residues: 4-deoxy-L-threo-5-hexosulose-uronate ketol-isomerase (278 aa).

Zn(2+) is bound by residues His-196, His-198, Glu-203, and His-245.

The protein belongs to the KduI family. Homohexamer. Requires Zn(2+) as cofactor.

The enzyme catalyses 5-dehydro-4-deoxy-D-glucuronate = 3-deoxy-D-glycero-2,5-hexodiulosonate. Its pathway is glycan metabolism; pectin degradation; 2-dehydro-3-deoxy-D-gluconate from pectin: step 4/5. Functionally, catalyzes the isomerization of 5-dehydro-4-deoxy-D-glucuronate to 3-deoxy-D-glycero-2,5-hexodiulosonate. This is 4-deoxy-L-threo-5-hexosulose-uronate ketol-isomerase from Escherichia coli O127:H6 (strain E2348/69 / EPEC).